The primary structure comprises 204 residues: GTP cyclohydrolase 1 (204 aa).

Zn(2+) is bound by residues cysteine 92, histidine 95, and cysteine 165.

The protein belongs to the GTP cyclohydrolase I family. As to quaternary structure, homomer.

The enzyme catalyses GTP + H2O = 7,8-dihydroneopterin 3'-triphosphate + formate + H(+). It participates in cofactor biosynthesis; 7,8-dihydroneopterin triphosphate biosynthesis; 7,8-dihydroneopterin triphosphate from GTP: step 1/1. This chain is GTP cyclohydrolase 1, found in Mycobacteroides abscessus (strain ATCC 19977 / DSM 44196 / CCUG 20993 / CIP 104536 / JCM 13569 / NCTC 13031 / TMC 1543 / L948) (Mycobacterium abscessus).